We begin with the raw amino-acid sequence, 410 residues long: Multidrug resistance protein MdtM (410 aa).

The Cytoplasmic portion of the chain corresponds to Met-1–Thr-11. Residues Leu-12 to Ile-32 traverse the membrane as a helical segment. Residues Gln-33 to Ser-48 lie on the Periplasmic side of the membrane. The chain crosses the membrane as a helical span at residues Leu-49–Gly-69. Residues Pro-70–Lys-78 lie on the Cytoplasmic side of the membrane. Residues Pro-79–Thr-99 traverse the membrane as a helical segment. Residues Ser-100–Gln-103 lie on the Periplasmic side of the membrane. Residues Phe-104–Val-124 form a helical membrane-spanning segment. The Cytoplasmic portion of the chain corresponds to Thr-125–Ala-140. A helical membrane pass occupies residues Ile-141–Met-161. At His-162 to Lys-167 the chain is on the periplasmic side. The chain crosses the membrane as a helical span at residues Val-168 to Met-188. The Cytoplasmic segment spans residues Pro-189–Leu-216. The chain crosses the membrane as a helical span at residues Phe-217–Val-237. The Periplasmic segment spans residues Ser-238 to Ser-251. A helical transmembrane segment spans residues Gln-252–Ala-272. At Arg-273–Arg-282 the chain is on the cytoplasmic side. Residues Phe-283–Leu-303 traverse the membrane as a helical segment. The Periplasmic segment spans residues Leu-304 to His-307. Residues Val-308 to Pro-328 form a helical membrane-spanning segment. Topologically, residues Thr-329–Ser-348 are cytoplasmic. The chain crosses the membrane as a helical span at residues Leu-349–Phe-369. Topologically, residues Asn-370 to Arg-373 are periplasmic. Residues Leu-374 to Leu-394 traverse the membrane as a helical segment. Residues Leu-395–Gln-410 lie on the Cytoplasmic side of the membrane.

Belongs to the major facilitator superfamily.

Its subcellular location is the cell inner membrane. Its function is as follows. Proton-dependent efflux pump. Confers resistance to a broad spectrum of chemically unrelated substrates. The polypeptide is Multidrug resistance protein MdtM (mdtM) (Escherichia coli O157:H7).